The following is a 361-amino-acid chain: MTSSYRQQLQAKIDRITTQFSEFTPPTLEVFESPEQHFRMRAEFRIWHTENDMFYAMFERNDDGKQKTVVRIDEFPIADKSINDLMPLLLAELKANSLLSQRLFEVDFLATLSGEMLVTLIYHRKLNQEWEQAAKALAEKLNIKIMGRSRGQKIVIGDDFVVEEFELLNRSFKYKQIESSFTQPNAQVCKKMLQWACDAAEGSKKHLLELYCGNGNFTLPLSLKFERVLATELAKSSVYAAQWNIEQNQIDNIQVARLSAEEFTQAYQGEREFRRLQEADIDIQSYDFGTVFVDPPRAGIDDETLKLLQGFERIIYISCNPDTLYENLKTLTQTHRVTKFALFDQFPYTHHVESGVLLEKI.

The S-adenosyl-L-methionine site is built by glutamine 183, tyrosine 211, asparagine 216, glutamate 232, and aspartate 294. Cysteine 319 serves as the catalytic Nucleophile. The active-site Proton acceptor is glutamate 353.

It belongs to the class I-like SAM-binding methyltransferase superfamily. RNA M5U methyltransferase family. TrmA subfamily.

The enzyme catalyses uridine(54) in tRNA + S-adenosyl-L-methionine = 5-methyluridine(54) in tRNA + S-adenosyl-L-homocysteine + H(+). It carries out the reaction uridine(341) in tmRNA + S-adenosyl-L-methionine = 5-methyluridine(341) in tmRNA + S-adenosyl-L-homocysteine + H(+). In terms of biological role, dual-specificity methyltransferase that catalyzes the formation of 5-methyluridine at position 54 (m5U54) in all tRNAs, and that of position 341 (m5U341) in tmRNA (transfer-mRNA). In Acinetobacter baumannii (strain AB307-0294), this protein is tRNA/tmRNA (uracil-C(5))-methyltransferase.